Consider the following 158-residue polypeptide: uncharacterized protein (158 aa).

2 consecutive transmembrane segments (helical) span residues 10 to 30 (LSSL…QFIV) and 137 to 157 (IEVF…AYFF).

The protein resides in the cell membrane. This is an uncharacterized protein from Bacillus subtilis (strain 168).